Reading from the N-terminus, the 428-residue chain is Tyrosine--tRNA ligase (428 aa).

Tyr-37 provides a ligand contact to L-tyrosine. Positions Pro-42–His-51 match the 'HIGH' region motif. Tyr-175 and Gln-179 together coordinate L-tyrosine. Residues Lys-235–Ser-239 carry the 'KMSKS' region motif. Residue Lys-238 participates in ATP binding. Residues Ala-358–Gly-415 form the S4 RNA-binding domain.

This sequence belongs to the class-I aminoacyl-tRNA synthetase family. TyrS type 1 subfamily. As to quaternary structure, homodimer.

The protein localises to the cytoplasm. It catalyses the reaction tRNA(Tyr) + L-tyrosine + ATP = L-tyrosyl-tRNA(Tyr) + AMP + diphosphate + H(+). Catalyzes the attachment of tyrosine to tRNA(Tyr) in a two-step reaction: tyrosine is first activated by ATP to form Tyr-AMP and then transferred to the acceptor end of tRNA(Tyr). This is Tyrosine--tRNA ligase from Corynebacterium jeikeium (strain K411).